A 111-amino-acid chain; its full sequence is Large ribosomal subunit protein uL24 (111 aa).

It belongs to the universal ribosomal protein uL24 family. As to quaternary structure, part of the 50S ribosomal subunit.

Functionally, one of two assembly initiator proteins, it binds directly to the 5'-end of the 23S rRNA, where it nucleates assembly of the 50S subunit. Its function is as follows. One of the proteins that surrounds the polypeptide exit tunnel on the outside of the subunit. The protein is Large ribosomal subunit protein uL24 of Cytophaga hutchinsonii (strain ATCC 33406 / DSM 1761 / CIP 103989 / NBRC 15051 / NCIMB 9469 / D465).